We begin with the raw amino-acid sequence, 216 residues long: Pyridoxine/pyridoxamine 5'-phosphate oxidase (216 aa).

Residues 12–15 (RREY) and Lys-70 each bind substrate. FMN is bound by residues 65–70 (RLVLLK), 80–81 (YT), Arg-86, Lys-87, and Gln-109. 3 residues coordinate substrate: Tyr-127, Arg-131, and Ser-135. FMN is bound by residues 144 to 145 (QS) and Trp-189. Position 195-197 (195-197 (RMH)) interacts with substrate. Position 199 (Arg-199) interacts with FMN.

The protein belongs to the pyridoxamine 5'-phosphate oxidase family. Homodimer. FMN is required as a cofactor.

It carries out the reaction pyridoxamine 5'-phosphate + O2 + H2O = pyridoxal 5'-phosphate + H2O2 + NH4(+). The enzyme catalyses pyridoxine 5'-phosphate + O2 = pyridoxal 5'-phosphate + H2O2. It participates in cofactor metabolism; pyridoxal 5'-phosphate salvage; pyridoxal 5'-phosphate from pyridoxamine 5'-phosphate: step 1/1. The protein operates within cofactor metabolism; pyridoxal 5'-phosphate salvage; pyridoxal 5'-phosphate from pyridoxine 5'-phosphate: step 1/1. Catalyzes the oxidation of either pyridoxine 5'-phosphate (PNP) or pyridoxamine 5'-phosphate (PMP) into pyridoxal 5'-phosphate (PLP). The chain is Pyridoxine/pyridoxamine 5'-phosphate oxidase from Sodalis glossinidius (strain morsitans).